The following is a 285-amino-acid chain: tRNA uridine(34) hydroxylase (285 aa).

One can recognise a Rhodanese domain in the interval 130 to 225 (RGDDVVFFDG…YGEAFGDTGL (96 aa)). Cys185 (cysteine persulfide intermediate) is an active-site residue.

It belongs to the TrhO family.

It carries out the reaction uridine(34) in tRNA + AH2 + O2 = 5-hydroxyuridine(34) in tRNA + A + H2O. Functionally, catalyzes oxygen-dependent 5-hydroxyuridine (ho5U) modification at position 34 in tRNAs. The protein is tRNA uridine(34) hydroxylase of Rhodococcus jostii (strain RHA1).